The primary structure comprises 366 residues: N-acetyl-L-citrulline deacetylase (366 aa).

Co(2+) contacts are provided by His-72 and Asp-103. Glu-130 (proton donor/acceptor) is an active-site residue. Glu-155 is a binding site for Co(2+).

The protein belongs to the peptidase M20A family. N-acetylcitrulline deacetylase subfamily. As to quaternary structure, forms homodimers in the crystal, but higher order oligomers may form in solution. Co(2+) is required as a cofactor.

The enzyme catalyses N(2)-acetyl-L-citrulline + H2O = L-citrulline + acetate. The catalysed reaction is N(2)-acetyl-L-ornithine + H2O = L-ornithine + acetate. It functions in the pathway amino-acid biosynthesis; L-arginine biosynthesis. Functionally, catalyzes the deacetylation of N-acetyl-L-citrulline to produce L-citrulline. This is a step in an alternative arginine biosynthesis pathway. Is also able to catalyze the deacetylation of N-acetylornithine in vitro, with almost equal velocity. However, this reaction may be not relevant in vivo since Xanthomonas does not possess the canonical argF gene and cannot convert ornithine to citrulline via ArgF'. In Xanthomonas campestris pv. campestris (strain ATCC 33913 / DSM 3586 / NCPPB 528 / LMG 568 / P 25), this protein is N-acetyl-L-citrulline deacetylase.